A 143-amino-acid chain; its full sequence is Nucleoside diphosphate kinase (143 aa).

ATP contacts are provided by K11, F59, R87, T93, R104, and N114. H117 (pros-phosphohistidine intermediate) is an active-site residue.

The protein belongs to the NDK family. In terms of assembly, homotetramer. Requires Mg(2+) as cofactor.

The protein localises to the cytoplasm. The catalysed reaction is a 2'-deoxyribonucleoside 5'-diphosphate + ATP = a 2'-deoxyribonucleoside 5'-triphosphate + ADP. The enzyme catalyses a ribonucleoside 5'-diphosphate + ATP = a ribonucleoside 5'-triphosphate + ADP. Functionally, major role in the synthesis of nucleoside triphosphates other than ATP. The ATP gamma phosphate is transferred to the NDP beta phosphate via a ping-pong mechanism, using a phosphorylated active-site intermediate. The sequence is that of Nucleoside diphosphate kinase from Pseudomonas aeruginosa (strain UCBPP-PA14).